Reading from the N-terminus, the 182-residue chain is NADH-quinone oxidoreductase subunit I (182 aa).

4Fe-4S ferredoxin-type domains follow at residues 50 to 82 (IILS…LQKA) and 92 to 121 (EFFR…MTPD). Residues Cys-62, Cys-65, Cys-68, Cys-72, Cys-101, Cys-104, Cys-107, and Cys-111 each contribute to the [4Fe-4S] cluster site.

This sequence belongs to the complex I 23 kDa subunit family. In terms of assembly, NDH-1 is composed of 14 different subunits. Subunits NuoA, H, J, K, L, M, N constitute the membrane sector of the complex. Requires [4Fe-4S] cluster as cofactor.

The protein resides in the cell inner membrane. The enzyme catalyses a quinone + NADH + 5 H(+)(in) = a quinol + NAD(+) + 4 H(+)(out). Functionally, NDH-1 shuttles electrons from NADH, via FMN and iron-sulfur (Fe-S) centers, to quinones in the respiratory chain. The immediate electron acceptor for the enzyme in this species is believed to be ubiquinone. Couples the redox reaction to proton translocation (for every two electrons transferred, four hydrogen ions are translocated across the cytoplasmic membrane), and thus conserves the redox energy in a proton gradient. This Psychrobacter arcticus (strain DSM 17307 / VKM B-2377 / 273-4) protein is NADH-quinone oxidoreductase subunit I.